A 59-amino-acid polypeptide reads, in one-letter code: Protein translocase subunit SecE (59 aa).

The helical transmembrane segment at 30 to 50 (ITVITTVIFFAIFFALIDSGI) threads the bilayer.

The protein belongs to the SecE/SEC61-gamma family. As to quaternary structure, component of the Sec protein translocase complex. Heterotrimer consisting of SecY, SecE and SecG subunits. The heterotrimers can form oligomers, although 1 heterotrimer is thought to be able to translocate proteins. Interacts with the ribosome. Interacts with SecDF, and other proteins may be involved. Interacts with SecA.

The protein resides in the cell membrane. In terms of biological role, essential subunit of the Sec protein translocation channel SecYEG. Clamps together the 2 halves of SecY. May contact the channel plug during translocation. In Bacillus licheniformis, this protein is Protein translocase subunit SecE.